The primary structure comprises 283 residues: Phosphatidylserine decarboxylase proenzyme (283 aa).

Residues Asp-88, His-145, and Ser-248 each act as charge relay system; for autoendoproteolytic cleavage activity in the active site. Ser-248 acts as the Schiff-base intermediate with substrate; via pyruvic acid; for decarboxylase activity in catalysis. Ser-248 is modified (pyruvic acid (Ser); by autocatalysis).

This sequence belongs to the phosphatidylserine decarboxylase family. PSD-B subfamily. Prokaryotic type I sub-subfamily. Heterodimer of a large membrane-associated beta subunit and a small pyruvoyl-containing alpha subunit. The cofactor is pyruvate. In terms of processing, is synthesized initially as an inactive proenzyme. Formation of the active enzyme involves a self-maturation process in which the active site pyruvoyl group is generated from an internal serine residue via an autocatalytic post-translational modification. Two non-identical subunits are generated from the proenzyme in this reaction, and the pyruvate is formed at the N-terminus of the alpha chain, which is derived from the carboxyl end of the proenzyme. The autoendoproteolytic cleavage occurs by a canonical serine protease mechanism, in which the side chain hydroxyl group of the serine supplies its oxygen atom to form the C-terminus of the beta chain, while the remainder of the serine residue undergoes an oxidative deamination to produce ammonia and the pyruvoyl prosthetic group on the alpha chain. During this reaction, the Ser that is part of the protease active site of the proenzyme becomes the pyruvoyl prosthetic group, which constitutes an essential element of the active site of the mature decarboxylase.

Its subcellular location is the cell membrane. The enzyme catalyses a 1,2-diacyl-sn-glycero-3-phospho-L-serine + H(+) = a 1,2-diacyl-sn-glycero-3-phosphoethanolamine + CO2. It functions in the pathway phospholipid metabolism; phosphatidylethanolamine biosynthesis; phosphatidylethanolamine from CDP-diacylglycerol: step 2/2. Catalyzes the formation of phosphatidylethanolamine (PtdEtn) from phosphatidylserine (PtdSer). This chain is Phosphatidylserine decarboxylase proenzyme, found in Variovorax paradoxus (strain S110).